Consider the following 329-residue polypeptide: tRNA(Ile)-lysidine synthase, chloroplastic (329 aa).

ATP is bound at residue 32 to 37 (SGGQDS).

Belongs to the tRNA(Ile)-lysidine synthase family.

It localises to the plastid. The protein localises to the chloroplast. It carries out the reaction cytidine(34) in tRNA(Ile2) + L-lysine + ATP = lysidine(34) in tRNA(Ile2) + AMP + diphosphate + H(+). Functionally, ligates lysine onto the cytidine present at position 34 of the AUA codon-specific tRNA(Ile) that contains the anticodon CAU, in an ATP-dependent manner. Cytidine is converted to lysidine, thus changing the amino acid specificity of the tRNA from methionine to isoleucine. The protein is tRNA(Ile)-lysidine synthase, chloroplastic of Pyropia yezoensis (Susabi-nori).